The primary structure comprises 135 residues: Small ribosomal subunit protein eS6 (135 aa).

Belongs to the eukaryotic ribosomal protein eS6 family.

The sequence is that of Small ribosomal subunit protein eS6 from Methanococcoides burtonii (strain DSM 6242 / NBRC 107633 / OCM 468 / ACE-M).